The primary structure comprises 245 residues: Protein crossbronx (245 aa).

A UBC core domain is found at 20–177 (QQEYKILAEY…VQESIVESKS (158 aa)).

The protein belongs to the ubiquitin-conjugating enzyme family. FTS subfamily.

In Drosophila virilis (Fruit fly), this protein is Protein crossbronx (cbx).